A 391-amino-acid chain; its full sequence is Casein kinase II subunit alpha (391 aa).

The tract at residues 36–41 is interaction with beta subunit; sequence QDDYQL. The Protein kinase domain maps to 39–324; the sequence is YQLVRKLGRG…AREAMEHPYF (286 aa). Residues 45–53 and lysine 68 contribute to the ATP site; that span reads LGRGKYSEV. Catalysis depends on aspartate 156, which acts as the Proton acceptor. 2 positions are modified to phosphothreonine; by CDK1: threonine 344 and threonine 360. Serine 362 and serine 370 each carry phosphoserine; by CDK1.

The protein belongs to the protein kinase superfamily. Ser/Thr protein kinase family. CK2 subfamily. In terms of assembly, heterotetramer composed of two catalytic subunits (alpha chain and/or alpha' chain) and two regulatory subunits (beta chains). The tetramer can exist as a combination of 2 alpha/2 beta, 2 alpha'/2 beta or 1 alpha/1 alpha'/2 beta subunits. Also part of a CK2-SPT16-SSRP1 complex composed of SSRP1, SUPT16H, CSNK2A1, CSNK2A2 and CSNK2B, which forms following UV irradiation. Interacts with RNPS1. Interacts with SNAI1. Interacts with PML. Interacts with CCAR2. Interacts with HIRIP3. In terms of processing, phosphorylated at Thr-344, Thr-360, Ser-362 and Ser-370 by CDK1 in prophase and metaphase and dephosphorylated during anaphase. Phosphorylation does not directly affect casein kinase 2 activity, but may contribute to its regulation by forming binding sites for interacting proteins and/or targeting it to different compartments.

The protein localises to the nucleus. It catalyses the reaction L-seryl-[protein] + ATP = O-phospho-L-seryl-[protein] + ADP + H(+). The enzyme catalyses L-threonyl-[protein] + ATP = O-phospho-L-threonyl-[protein] + ADP + H(+). Constitutively active protein kinase whose activity is not directly affected by phosphorylation. Seems to be regulated by level of expression and localization. Its function is as follows. Catalytic subunit of a constitutively active serine/threonine-protein kinase complex that phosphorylates a large number of substrates containing acidic residues C-terminal to the phosphorylated serine or threonine. Regulates numerous cellular processes, such as cell cycle progression, apoptosis and transcription, as well as viral infection. May act as a regulatory node which integrates and coordinates numerous signals leading to an appropriate cellular response. During mitosis, functions as a component of the p53/TP53-dependent spindle assembly checkpoint (SAC) that maintains cyclin-B-CDK1 activity and G2 arrest in response to spindle damage. Also required for p53/TP53-mediated apoptosis, phosphorylating 'Ser-392' of p53/TP53 following UV irradiation. Phosphorylates a number of DNA repair proteins in response to DNA damage, such as MDC1, MRE11, RAD9A, RAD51 and HTATSF1, promoting their recruitment to DNA damage sites. Can also negatively regulate apoptosis. Phosphorylates the caspases CASP9 and CASP2 and the apoptotic regulator NOL3. Phosphorylation protects CASP9 from cleavage and activation by CASP8, and inhibits the dimerization of CASP2 and activation of CASP8. Phosphorylates YY1, protecting YY1 from cleavage by CASP7 during apoptosis. Regulates transcription by direct phosphorylation of RNA polymerases I, II, III and IV. Also phosphorylates and regulates numerous transcription factors including NF-kappa-B, STAT1, CREB1, IRF1, IRF2, ATF1, ATF4, SRF, MAX, JUN, FOS, MYC and MYB. Phosphorylates Hsp90 and its co-chaperones FKBP4 and CDC37, which is essential for chaperone function. Mediates sequential phosphorylation of FNIP1, promoting its gradual interaction with Hsp90, leading to activate both kinase and non-kinase client proteins of Hsp90. Regulates Wnt signaling by phosphorylating CTNNB1 and the transcription factor LEF1. Acts as an ectokinase that phosphorylates several extracellular proteins. Phosphorylates PML at 'Ser-565' and primes it for ubiquitin-mediated degradation. Plays an important role in the circadian clock function by phosphorylating BMAL1 at 'Ser-90' which is pivotal for its interaction with CLOCK and which controls CLOCK nuclear entry. Phosphorylates FMR1, promoting FMR1-dependent formation of a membraneless compartment. May phosphorylate histone H2A on 'Ser-1'. The polypeptide is Casein kinase II subunit alpha (Csnk2a1) (Mus musculus (Mouse)).